We begin with the raw amino-acid sequence, 292 residues long: Porphobilinogen deaminase (292 aa).

Position 235 is an S-(dipyrrolylmethanemethyl)cysteine (cysteine 235).

Belongs to the HMBS family. As to quaternary structure, monomer. It depends on dipyrromethane as a cofactor.

It catalyses the reaction 4 porphobilinogen + H2O = hydroxymethylbilane + 4 NH4(+). It functions in the pathway porphyrin-containing compound metabolism; protoporphyrin-IX biosynthesis; coproporphyrinogen-III from 5-aminolevulinate: step 2/4. Its function is as follows. Tetrapolymerization of the monopyrrole PBG into the hydroxymethylbilane pre-uroporphyrinogen in several discrete steps. The chain is Porphobilinogen deaminase from Acetivibrio thermocellus (strain ATCC 27405 / DSM 1237 / JCM 9322 / NBRC 103400 / NCIMB 10682 / NRRL B-4536 / VPI 7372) (Clostridium thermocellum).